The sequence spans 338 residues: DNA-directed RNA polymerase subunit alpha (338 aa).

Residues 1-230 (MRKITTSAYM…QQMSVFKGIL (230 aa)) form an alpha N-terminal domain (alpha-NTD) region. Positions 247–338 (FSKLLSSVED…ELKSQMSAKE (92 aa)) are alpha C-terminal domain (alpha-CTD).

Belongs to the RNA polymerase alpha chain family. Homodimer. The RNAP catalytic core consists of 2 alpha, 1 beta, 1 beta' and 1 omega subunit. When a sigma factor is associated with the core the holoenzyme is formed, which can initiate transcription.

The catalysed reaction is RNA(n) + a ribonucleoside 5'-triphosphate = RNA(n+1) + diphosphate. DNA-dependent RNA polymerase catalyzes the transcription of DNA into RNA using the four ribonucleoside triphosphates as substrates. This chain is DNA-directed RNA polymerase subunit alpha, found in Campylobacter concisus (strain 13826).